Consider the following 95-residue polypeptide: Opiscorpine-1 (95 aa).

A signal peptide spans 1–19 (MNNKLTALIFLGLLAIASC). Residues 55–95 (EFMCVANVDMTKSCDTHCQKASGEKGYCHGTKCKCGVPLSY) form the BetaSPN-type CS-alpha/beta domain. Intrachain disulfides connect Cys-58/Cys-82, Cys-68/Cys-87, and Cys-72/Cys-89.

Belongs to the long chain scorpion toxin family. Class 3 subfamily. As to expression, expressed by the venom gland.

It is found in the secreted. The short synthetic peptide (20-54) has antimicrobial activity against the yeasts F.culmorum (IC(50)=8.8 uM) and F.oxysporum (IC(50)=10 uM), and the Gram-negative bacteria E.coli. The protein is Opiscorpine-1 of Opistophthalmus carinatus (African yellow leg scorpion).